A 367-amino-acid chain; its full sequence is rRNA processing protein RCL1 (367 aa).

Ser2 bears the N-acetylserine mark.

This sequence belongs to the RNA 3'-terminal cyclase family. Type 2 subfamily. As to quaternary structure, interacts directly with BMS1 and the U3 snoRNA to form a stable subcomplex. Component of the 90S small subunit processome also known as 90S pre-ribosome that consists of the 35S pre-rRNA, early-associating ribosomal proteins most of which are part of the small ribosomal subunit, the U3 snoRNA and associated proteins.

The protein resides in the nucleus. The protein localises to the nucleolus. In terms of biological role, does not have cyclase activity. Plays a role in 40S-ribosomal-subunit biogenesis in the early pre-rRNA processing steps at sites A0, A1 and A2 that are required for proper maturation of the 18S RNA. RCL1 activates BMS1 by promoting GDP/GTP exchange. The polypeptide is rRNA processing protein RCL1 (RCL1) (Saccharomyces cerevisiae (strain ATCC 204508 / S288c) (Baker's yeast)).